Reading from the N-terminus, the 424-residue chain is Tyrosine--tRNA ligase (424 aa).

An L-tyrosine-binding site is contributed by tyrosine 37. The 'HIGH' region signature appears at 42–51 (PTADSLHLGH). L-tyrosine contacts are provided by tyrosine 175 and glutamine 179. A 'KMSKS' region motif is present at residues 235 to 239 (KFGKT). Lysine 238 is a binding site for ATP. In terms of domain architecture, S4 RNA-binding spans 357-414 (ADLQQALVNAELVPSRGQARTMISSNAVAINGEKQSDPEYAFTDADRLFGRYTLLRRG).

It belongs to the class-I aminoacyl-tRNA synthetase family. TyrS type 1 subfamily. In terms of assembly, homodimer.

It is found in the cytoplasm. The catalysed reaction is tRNA(Tyr) + L-tyrosine + ATP = L-tyrosyl-tRNA(Tyr) + AMP + diphosphate + H(+). Catalyzes the attachment of tyrosine to tRNA(Tyr) in a two-step reaction: tyrosine is first activated by ATP to form Tyr-AMP and then transferred to the acceptor end of tRNA(Tyr). The polypeptide is Tyrosine--tRNA ligase (Yersinia enterocolitica serotype O:8 / biotype 1B (strain NCTC 13174 / 8081)).